Here is a 103-residue protein sequence, read N- to C-terminus: Small ribosomal subunit protein uS10 (103 aa).

The protein belongs to the universal ribosomal protein uS10 family. As to quaternary structure, part of the 30S ribosomal subunit.

In terms of biological role, involved in the binding of tRNA to the ribosomes. The sequence is that of Small ribosomal subunit protein uS10 from Paraburkholderia xenovorans (strain LB400).